The following is a 238-amino-acid chain: Lactate utilization protein A (238 aa).

Belongs to the LutA/YkgE family.

Is essential for L-lactate degradation and allows cells to grow with lactate as the sole carbon source. May also allow cells to utilize an alternative carbon source during biofilm formation, since it contributes to the formation of architecturally complex communities when lactate is present. The sequence is that of Lactate utilization protein A (lutA) from Bacillus subtilis (strain 168).